We begin with the raw amino-acid sequence, 866 residues long: Potassium voltage-gated channel subfamily KQT member 3 (866 aa).

Positions 1–42 (MGLKARRPAGAAGGGGDGGGGGGGAANPAGGDAAAAGDEERK) are disordered. Residues 1 to 120 (MGLKARRPAG…IYDALERPRG (120 aa)) lie on the Cytoplasmic side of the membrane. Gly residues predominate over residues 11–25 (AAGGGGDGGGGGGGA). Over residues 26–36 (ANPAGGDAAAA) the composition is skewed to low complexity. Threonine 81 carries the post-translational modification Phosphothreonine. Residues 121–143 (WALLYHALVFLIVLGCLILAVLT) traverse the membrane as a helical segment. At 144 to 153 (TFREYETVSG) the chain is on the extracellular side. Residues 154-175 (DWLLLLETFAIFIFGAEFALRI) form a helical membrane-spanning segment. The Cytoplasmic segment spans residues 176 to 193 (WAAGCCCRYKGWRGRLKF). Residues 194–213 (ARKPLCMLDIFVLIASVPVV) traverse the membrane as a helical segment. At 214 to 225 (AVGNQGNVLATS) the chain is on the extracellular side. A helical; Voltage-sensor membrane pass occupies residues 226-244 (LRSLRFLQILRMLRMDRRG). Arginine 243 is a binding site for a 1,2-diacyl-sn-glycero-3-phospho-(1D-myo-inositol-4,5-bisphosphate). At 245–256 (GTWKLLGSAICA) the chain is on the cytoplasmic side. Residues 257 to 282 (HSKELITAWYIGFLTLILSSFLVYLV) traverse the membrane as a helical segment. Lysine 259 is a binding site for a 1,2-diacyl-sn-glycero-3-phospho-(1D-myo-inositol-4,5-bisphosphate). At 283–302 (EKDVPEVDAQGEEMKEEFET) the chain is on the extracellular side. The pore-forming intramembrane region spans 303-315 (YADALWWGLITLA). The short motif at 316-321 (TIGYGD) is the Selectivity filter element. Topologically, residues 316 to 326 (TIGYGDKTPKT) are extracellular. A helical transmembrane segment spans residues 327–353 (WEGRLIAATFSLIGVSFFALPAGILGS). Over 354 to 866 (GLALKVQEQH…SIWTPSGKPT (513 aa)) the chain is Cytoplasmic. Residues 356 to 537 (ALKVQEQHRQ…RLYKKKFKET (182 aa)) form a mediates interaction with calmodulin region. Position 366 (lysine 366) interacts with a 1,2-diacyl-sn-glycero-3-phospho-(1D-myo-inositol-4,5-bisphosphate). 3 disordered regions span residues 574 to 617 (PGPP…EDQS), 656 to 676 (GFSP…EDRR), and 757 to 866 (QVEL…GKPT). Residues 837–866 (EPFTPSGSLPLSSTGDGISDSIWTPSGKPT) show a composition bias toward polar residues.

It belongs to the potassium channel family. KQT (TC 1.A.1.15) subfamily. Kv7.3/KCNQ3 sub-subfamily. As to quaternary structure, heterotetramer with KCNQ2; forms heterotetrameric native M-channel responsible for the M-current. Interacts with calmodulin; the interaction is calcium-independent, constitutive and participates in the proper assembly of a functional M-channel. Heteromultimer with KCNQ5. May associate with KCNE2. Interacts with IQCJ-SCHIP1. Interacts (via the pore module) with SLC5A3/SMIT1; forms a coregulatory complex that alters ion selectivity, voltage dependence and gating kinetics of the channel. In terms of processing, KCNQ2/KCNQ3 are ubiquitinated by NEDD4L. Ubiquitination leads to protein degradation. Degradation induced by NEDD4L is inhibited by USP36.

The protein resides in the cell membrane. The catalysed reaction is K(+)(in) = K(+)(out). The enzyme catalyses Rb(+)(in) = Rb(+)(out). It catalyses the reaction Cs(+)(in) = Cs(+)(out). It carries out the reaction Na(+)(in) = Na(+)(out). With respect to regulation, phosphatidylinositol-4,5-bisphosphate (PIP2) potentiates the activation of KCNQ channels by enhancing the electro-mechanical coupling of the voltage-sensing domain (VSD) and the pore-forming domain (PD). In the closed state of the channel, PIP2 is anchored at the S2-S3 loop; upon channel activation, PIP2 interacts with the S4-S5 linker and is involved in channel gating. Calcium suppresses KCNQ2-KCNQ3 channel currents, with calcium-bound calmodulin inducing a change in channel configuration which leads to the reduction of channel affinity for PIP2 and subsequent current suppression. Its function is as follows. Pore-forming subunit of the voltage-gated potassium (Kv) M-channel which is responsible for the M-current, a key controller of neuronal excitability. M-channel is composed of pore-forming subunits KCNQ2 and KCNQ3 assembled as heterotetramers. The native M-current has a slowly activating and deactivating potassium conductance which plays a critical role in determining the subthreshold electrical excitability of neurons as well as the responsiveness to synaptic inputs. M-channel is selectively permeable in vitro to other cations besides potassium, in decreasing order of affinity K(+) &gt; Rb(+) &gt; Cs(+) &gt; Na(+). M-channel association with SLC5A3/SMIT1 alters channel ion selectivity, increasing Na(+) and Cs(+) permeation relative to K(+). Suppressed by activation of M1 muscarinic acetylcholine receptors. KCNQ3 also associates with KCNQ5 to form a functional channel in vitro and may also contribute to the M-current in brain. This Bos taurus (Bovine) protein is Potassium voltage-gated channel subfamily KQT member 3.